The sequence spans 66 residues: Large ribosomal subunit protein bL33c (66 aa).

Belongs to the bacterial ribosomal protein bL33 family.

It is found in the plastid. The protein resides in the chloroplast. The protein is Large ribosomal subunit protein bL33c of Dioscorea elephantipes (Elephant's foot yam).